The chain runs to 249 residues: Aspartate/glutamate leucyltransferase (249 aa).

It belongs to the R-transferase family. Bpt subfamily.

It is found in the cytoplasm. It carries out the reaction N-terminal L-glutamyl-[protein] + L-leucyl-tRNA(Leu) = N-terminal L-leucyl-L-glutamyl-[protein] + tRNA(Leu) + H(+). It catalyses the reaction N-terminal L-aspartyl-[protein] + L-leucyl-tRNA(Leu) = N-terminal L-leucyl-L-aspartyl-[protein] + tRNA(Leu) + H(+). Functions in the N-end rule pathway of protein degradation where it conjugates Leu from its aminoacyl-tRNA to the N-termini of proteins containing an N-terminal aspartate or glutamate. This Xanthobacter autotrophicus (strain ATCC BAA-1158 / Py2) protein is Aspartate/glutamate leucyltransferase.